Consider the following 301-residue polypeptide: GTPase Era (301 aa).

In terms of domain architecture, Era-type G spans 7 to 175 (YCGFIAIVGR…AAIVRKHLPE (169 aa)). The interval 15 to 22 (GRPNVGKS) is G1. 15 to 22 (GRPNVGKS) contributes to the GTP binding site. The G2 stretch occupies residues 41 to 45 (QTTRH). Positions 62–65 (DTPG) are G3. Residues 62-66 (DTPGL) and 124-127 (NKVD) contribute to the GTP site. Residues 124–127 (NKVD) form a G4 region. A G5 region spans residues 154–156 (ISA). The region spanning 206–283 (LGAELPYSVT…HLELWVKVKS (78 aa)) is the KH type-2 domain.

Belongs to the TRAFAC class TrmE-Era-EngA-EngB-Septin-like GTPase superfamily. Era GTPase family. As to quaternary structure, monomer.

Its subcellular location is the cytoplasm. It localises to the cell inner membrane. An essential GTPase that binds both GDP and GTP, with rapid nucleotide exchange. Plays a role in 16S rRNA processing and 30S ribosomal subunit biogenesis and possibly also in cell cycle regulation and energy metabolism. The polypeptide is GTPase Era (Escherichia coli (strain K12 / DH10B)).